A 416-amino-acid chain; its full sequence is Probable glucan 1,3-beta-glucosidase A (416 aa).

The first 21 residues, 1–21, serve as a signal peptide directing secretion; that stretch reads MLYNLSKAVLALSVLAASADA. Glu209 serves as the catalytic Proton donor. 2 cysteine pairs are disulfide-bonded: Cys290/Cys415 and Cys316/Cys341. Glu308 (nucleophile) is an active-site residue.

Belongs to the glycosyl hydrolase 5 (cellulase A) family. Monomer. Requires Mn(2+) as cofactor.

The protein resides in the secreted. The catalysed reaction is Successive hydrolysis of beta-D-glucose units from the non-reducing ends of (1-&gt;3)-beta-D-glucans, releasing alpha-glucose.. In terms of biological role, beta-glucanases participate in the metabolism of beta-glucan, the main structural component of the cell wall. It could also function biosynthetically as a transglycosylase. The sequence is that of Probable glucan 1,3-beta-glucosidase A (exgA) from Aspergillus terreus (strain NIH 2624 / FGSC A1156).